The chain runs to 487 residues: Glycogen synthase (487 aa).

K19 serves as a coordination point for ADP-alpha-D-glucose.

This sequence belongs to the glycosyltransferase 1 family. Bacterial/plant glycogen synthase subfamily.

The enzyme catalyses [(1-&gt;4)-alpha-D-glucosyl](n) + ADP-alpha-D-glucose = [(1-&gt;4)-alpha-D-glucosyl](n+1) + ADP + H(+). It participates in glycan biosynthesis; glycogen biosynthesis. Its function is as follows. Synthesizes alpha-1,4-glucan chains using ADP-glucose. This is Glycogen synthase from Moorella thermoacetica (strain ATCC 39073 / JCM 9320).